We begin with the raw amino-acid sequence, 803 residues long: Protein AMEIOTIC 1 homolog (803 aa).

Disordered regions lie at residues R21–S64 and R264–A333. Residues N39–K50 are compositionally biased toward basic and acidic residues. Polar residues predominate over residues N51–S64. Residues K283–R295 are compositionally biased toward basic and acidic residues. Residues A296–K313 show a composition bias toward basic residues. The span at R314–A333 shows a compositional bias: basic and acidic residues. The stretch at V450 to L567 forms a coiled coil. The tract at residues I651–A688 is disordered.

It is found in the nucleus. The protein localises to the chromosome. Its function is as follows. Plays a fundamental role in building the proper chromosome structure at the beginning of meiosis in male meiocytes. Required for the transition from leptotene to zygotene in meiocytes. Required for homologous chromosome pairing. The chain is Protein AMEIOTIC 1 homolog from Oryza sativa subsp. japonica (Rice).